A 300-amino-acid chain; its full sequence is uncharacterized protein (300 aa).

The first 20 residues, 1-20 (MRLLISCILILSILVNFISG), serve as a signal peptide directing secretion. Residues 21–279 (HAVLVAPTPF…PCSIYGDGNG (259 aa)) are Extracellular-facing. Asparagine 56, asparagine 217, and asparagine 278 each carry an N-linked (GlcNAc...) asparagine glycan. A helical transmembrane segment spans residues 280 to 300 (SNLIIIPTLLIISILSLILMF).

The protein resides in the membrane. This is an uncharacterized protein from Dictyostelium discoideum (Social amoeba).